A 318-amino-acid polypeptide reads, in one-letter code: uncharacterized protein (318 aa).

Helical transmembrane passes span 112–132, 147–167, 209–229, and 237–257; these read VIGV…PVFL, IAIE…FLSM, CGSS…LLVP, and VIDR…VLQL.

It is found in the cell membrane. This is an uncharacterized protein from Bacillus subtilis (strain 168).